The following is a 369-amino-acid chain: NSFL1 cofactor p47 (369 aa).

2 disordered regions span residues 46-115 (DEDI…KSPN) and 133-156 (VDRTAKSSGESSKPKPFAGGGYRL). The segment covering 67–81 (SDHRVTSFRDLVHAQ) has biased composition (basic and acidic residues). The Nuclear localization signal motif lies at 109–115 (PRKKSPN). Residues 172–175 (RHNS) carry the Nuclear localization signal motif. The SEP domain occupies 178–243 (DVHVVLKLWK…MEDHRDEEYV (66 aa)). A compositionally biased stretch (polar residues) spans 260–277 (GSTAPQVLSTSSPAQQAE). Positions 260–280 (GSTAPQVLSTSSPAQQAENEA) are disordered. Positions 291–367 (SEPVTNIQIR…NLLNAVIVQR (77 aa)) constitute a UBX domain.

This sequence belongs to the NSFL1C family.

It localises to the nucleus. The protein resides in the golgi apparatus. It is found in the golgi stack. The protein localises to the cytoplasm. Its subcellular location is the cytoskeleton. It localises to the microtubule organizing center. The protein resides in the centrosome. Its function is as follows. Reduces the ATPase activity of VCP. Necessary for the fragmentation of Golgi stacks during mitosis and for VCP-mediated reassembly of Golgi stacks after mitosis. May play a role in VCP-mediated formation of transitional endoplasmic reticulum (tER). Inhibits the activity of CTSL (in vitro). Together with UBXN2B/p37, regulates the centrosomal levels of kinase AURKA/Aurora A levels during mitotic progression by promoting AURKA removal from centrosomes in prophase. Also, regulates spindle orientation during mitosis. This Gallus gallus (Chicken) protein is NSFL1 cofactor p47 (NSFL1C).